We begin with the raw amino-acid sequence, 324 residues long: O-ureido-L-serine synthase (324 aa).

Lysine 43 carries the N6-(pyridoxal phosphate)lysine modification. Pyridoxal 5'-phosphate is bound by residues asparagine 73, 177 to 181 (GTTGT), and serine 265.

This sequence belongs to the cysteine synthase/cystathionine beta-synthase family. Homotetramer. The cofactor is pyridoxal 5'-phosphate.

The catalysed reaction is hydroxyurea + O-acetyl-L-serine = O-ureido-L-serine + acetate + H(+). The enzyme catalyses O-acetyl-L-serine + hydrogen sulfide = L-cysteine + acetate. Involved in the biosynthesis of the antibiotic D-cycloserine (DCS), a cyclic structural analog of D-alanine, used as an antitubercular agent. Catalyzes the addition of hydroxyurea on O-acetyl-L-serine (OAS) to yield O-ureido-L-serine. It prefers sulfide as the second substrate, followed by hydroxyurea, L-homocysteine, and thiosulfate. This Streptomyces lavendulae protein is O-ureido-L-serine synthase.